Reading from the N-terminus, the 425-residue chain is Enolase (425 aa).

Q162 provides a ligand contact to (2R)-2-phosphoglycerate. E204 acts as the Proton donor in catalysis. Mg(2+) contacts are provided by D241, E284, and D311. Residues K336, R365, S366, and K387 each contribute to the (2R)-2-phosphoglycerate site. K336 functions as the Proton acceptor in the catalytic mechanism.

Belongs to the enolase family. Requires Mg(2+) as cofactor.

Its subcellular location is the cytoplasm. It is found in the secreted. The protein resides in the cell surface. The enzyme catalyses (2R)-2-phosphoglycerate = phosphoenolpyruvate + H2O. The protein operates within carbohydrate degradation; glycolysis; pyruvate from D-glyceraldehyde 3-phosphate: step 4/5. Functionally, catalyzes the reversible conversion of 2-phosphoglycerate (2-PG) into phosphoenolpyruvate (PEP). It is essential for the degradation of carbohydrates via glycolysis. The protein is Enolase of Brucella abortus (strain S19).